Reading from the N-terminus, the 236-residue chain is Large ribosomal subunit protein uL1 (236 aa).

It belongs to the universal ribosomal protein uL1 family. In terms of assembly, part of the 50S ribosomal subunit.

In terms of biological role, binds directly to 23S rRNA. The L1 stalk is quite mobile in the ribosome, and is involved in E site tRNA release. Its function is as follows. Protein L1 is also a translational repressor protein, it controls the translation of the L11 operon by binding to its mRNA. The polypeptide is Large ribosomal subunit protein uL1 (Corynebacterium efficiens (strain DSM 44549 / YS-314 / AJ 12310 / JCM 11189 / NBRC 100395)).